A 69-amino-acid chain; its full sequence is DNA gyrase inhibitor YacG (69 aa).

Zn(2+) contacts are provided by Cys7, Cys10, Cys26, and Cys30.

This sequence belongs to the DNA gyrase inhibitor YacG family. As to quaternary structure, interacts with GyrB. Zn(2+) is required as a cofactor.

Functionally, inhibits all the catalytic activities of DNA gyrase by preventing its interaction with DNA. Acts by binding directly to the C-terminal domain of GyrB, which probably disrupts DNA binding by the gyrase. The polypeptide is DNA gyrase inhibitor YacG (Shewanella baltica (strain OS223)).